The sequence spans 252 residues: Phosphoglycolate phosphatase (252 aa).

The active-site Nucleophile is Asp-13. Asp-13, Asp-15, and Asp-192 together coordinate Mg(2+).

The protein belongs to the HAD-like hydrolase superfamily. CbbY/CbbZ/Gph/YieH family. In terms of assembly, monomer. Requires Mg(2+) as cofactor. Chloride is required as a cofactor.

The catalysed reaction is 2-phosphoglycolate + H2O = glycolate + phosphate. Its pathway is organic acid metabolism; glycolate biosynthesis; glycolate from 2-phosphoglycolate: step 1/1. Specifically catalyzes the dephosphorylation of 2-phosphoglycolate. Is involved in the dissimilation of the intracellular 2-phosphoglycolate formed during the DNA repair of 3'-phosphoglycolate ends, a major class of DNA lesions induced by oxidative stress. This chain is Phosphoglycolate phosphatase, found in Shigella flexneri.